A 271-amino-acid polypeptide reads, in one-letter code: Beta-lysine N(6)-acetyltransferase (271 aa).

Positions 86–122 (LRKDRGTGKNQKKKKISRKKDNWKKRKEKSRLPEGYT) are disordered. The segment covering 95-114 (NQKKKKISRKKDNWKKRKEK) has biased composition (basic residues). In terms of domain architecture, N-acetyltransferase spans 121 to 269 (YTLRPAVQAD…GFEDMNIWCR (149 aa)).

Belongs to the acetyltransferase family.

It carries out the reaction (3S)-3,6-diaminohexanoate + acetyl-CoA = (3S)-6-acetamido-3-aminohexanoate + CoA + H(+). Functionally, catalyzes the acetylation of beta-lysine to N6-acetyl-beta-lysine, a compatible solute produced by methanogenic archaea that helps cells to cope with salt stress. This chain is Beta-lysine N(6)-acetyltransferase, found in Methanosarcina mazei (strain ATCC BAA-159 / DSM 3647 / Goe1 / Go1 / JCM 11833 / OCM 88) (Methanosarcina frisia).